We begin with the raw amino-acid sequence, 749 residues long: Fibronectin type III and SPRY domain-containing protein 2 (749 aa).

A coiled-coil region spans residues 205–317; sequence LNEALESAKD…TIEEMCHEEK (113 aa). Fibronectin type-III domains lie at 375–470 and 471–564; these read PVIN…TAPS and PPII…TIGS. One can recognise a B30.2/SPRY domain in the interval 546-744; the sequence is NMGGPSVRSE…KVHNGISMPK (199 aa).

As to quaternary structure, interacts with CMYA5. In cardiac muscles, identified in a complex composed of FSD2, CMYA5 and RYR2.

The protein localises to the nucleus. It is found in the sarcoplasmic reticulum. It localises to the cytoplasm. The protein resides in the perinuclear region. The polypeptide is Fibronectin type III and SPRY domain-containing protein 2 (FSD2) (Homo sapiens (Human)).